The primary structure comprises 161 residues: 2-C-methyl-D-erythritol 2,4-cyclodiphosphate synthase (161 aa).

The a divalent metal cation site is built by D13 and H15. 4-CDP-2-C-methyl-D-erythritol 2-phosphate contacts are provided by residues 13–15 (DAH) and 40–41 (HS). H48 is a binding site for a divalent metal cation. Position 62–64 (62–64 (DIG)) interacts with 4-CDP-2-C-methyl-D-erythritol 2-phosphate.

It belongs to the IspF family. As to quaternary structure, homotrimer. The cofactor is a divalent metal cation.

It carries out the reaction 4-CDP-2-C-methyl-D-erythritol 2-phosphate = 2-C-methyl-D-erythritol 2,4-cyclic diphosphate + CMP. It functions in the pathway isoprenoid biosynthesis; isopentenyl diphosphate biosynthesis via DXP pathway; isopentenyl diphosphate from 1-deoxy-D-xylulose 5-phosphate: step 4/6. Involved in the biosynthesis of isopentenyl diphosphate (IPP) and dimethylallyl diphosphate (DMAPP), two major building blocks of isoprenoid compounds. Catalyzes the conversion of 4-diphosphocytidyl-2-C-methyl-D-erythritol 2-phosphate (CDP-ME2P) to 2-C-methyl-D-erythritol 2,4-cyclodiphosphate (ME-CPP) with a corresponding release of cytidine 5-monophosphate (CMP). This chain is 2-C-methyl-D-erythritol 2,4-cyclodiphosphate synthase, found in Deinococcus radiodurans (strain ATCC 13939 / DSM 20539 / JCM 16871 / CCUG 27074 / LMG 4051 / NBRC 15346 / NCIMB 9279 / VKM B-1422 / R1).